Here is a 248-residue protein sequence, read N- to C-terminus: Pyridoxine 5'-phosphate synthase (248 aa).

Residue Asn12 coordinates 3-amino-2-oxopropyl phosphate. 14 to 15 (DH) provides a ligand contact to 1-deoxy-D-xylulose 5-phosphate. Arg23 is a 3-amino-2-oxopropyl phosphate binding site. His48 functions as the Proton acceptor in the catalytic mechanism. Residues Arg50 and His55 each contribute to the 1-deoxy-D-xylulose 5-phosphate site. The active-site Proton acceptor is the Glu75. Thr105 is a binding site for 1-deoxy-D-xylulose 5-phosphate. The active-site Proton donor is His196. Residues Gly197 and 218–219 (GH) each bind 3-amino-2-oxopropyl phosphate.

Belongs to the PNP synthase family. In terms of assembly, homooctamer; tetramer of dimers.

It localises to the cytoplasm. The enzyme catalyses 3-amino-2-oxopropyl phosphate + 1-deoxy-D-xylulose 5-phosphate = pyridoxine 5'-phosphate + phosphate + 2 H2O + H(+). It participates in cofactor biosynthesis; pyridoxine 5'-phosphate biosynthesis; pyridoxine 5'-phosphate from D-erythrose 4-phosphate: step 5/5. Functionally, catalyzes the complicated ring closure reaction between the two acyclic compounds 1-deoxy-D-xylulose-5-phosphate (DXP) and 3-amino-2-oxopropyl phosphate (1-amino-acetone-3-phosphate or AAP) to form pyridoxine 5'-phosphate (PNP) and inorganic phosphate. This chain is Pyridoxine 5'-phosphate synthase, found in Azotobacter vinelandii (strain DJ / ATCC BAA-1303).